The sequence spans 511 residues: ATP synthase subunit alpha (511 aa).

169–176 (GDRQTGKT) contacts ATP.

Belongs to the ATPase alpha/beta chains family. As to quaternary structure, F-type ATPases have 2 components, CF(1) - the catalytic core - and CF(0) - the membrane proton channel. CF(1) has five subunits: alpha(3), beta(3), gamma(1), delta(1), epsilon(1). CF(0) has three main subunits: a(1), b(2) and c(9-12). The alpha and beta chains form an alternating ring which encloses part of the gamma chain. CF(1) is attached to CF(0) by a central stalk formed by the gamma and epsilon chains, while a peripheral stalk is formed by the delta and b chains.

The protein localises to the cell inner membrane. The enzyme catalyses ATP + H2O + 4 H(+)(in) = ADP + phosphate + 5 H(+)(out). Its function is as follows. Produces ATP from ADP in the presence of a proton gradient across the membrane. The alpha chain is a regulatory subunit. This is ATP synthase subunit alpha from Bartonella bacilliformis (strain ATCC 35685 / KC583 / Herrer 020/F12,63).